A 316-amino-acid chain; its full sequence is Probable cell division protein WhiA (316 aa).

The H-T-H motif DNA-binding region spans threonine 275–alanine 309.

Belongs to the WhiA family.

Its function is as follows. Involved in cell division and chromosome segregation. In Bacillus mycoides (strain KBAB4) (Bacillus weihenstephanensis), this protein is Probable cell division protein WhiA.